Here is a 141-residue protein sequence, read N- to C-terminus: Large ribosomal subunit protein uL11 (141 aa).

The protein belongs to the universal ribosomal protein uL11 family. Part of the ribosomal stalk of the 50S ribosomal subunit. Interacts with L10 and the large rRNA to form the base of the stalk. L10 forms an elongated spine to which L12 dimers bind in a sequential fashion forming a multimeric L10(L12)X complex. Post-translationally, one or more lysine residues are methylated.

Its function is as follows. Forms part of the ribosomal stalk which helps the ribosome interact with GTP-bound translation factors. The protein is Large ribosomal subunit protein uL11 of Lactococcus lactis subsp. lactis (strain IL1403) (Streptococcus lactis).